The sequence spans 30 residues: U10-ctenitoxin-Co1b (30 aa).

Disulfide bonds link Cys2-Cys17 and Cys9-Cys22.

In terms of tissue distribution, expressed by the venom gland.

Its subcellular location is the secreted. Functionally, antagonist of L-type calcium channels (Cav1/CACNA1). This is U10-ctenitoxin-Co1b from Ctenus ornatus (Brazilian spider).